Reading from the N-terminus, the 202-residue chain is LexA repressor (202 aa).

Residues 28-48 (RAEIAQRLGFRSPNAAEEHLK) constitute a DNA-binding region (H-T-H motif). Residues serine 119 and lysine 156 each act as for autocatalytic cleavage activity in the active site.

Belongs to the peptidase S24 family. Homodimer.

The enzyme catalyses Hydrolysis of Ala-|-Gly bond in repressor LexA.. Represses a number of genes involved in the response to DNA damage (SOS response), including recA and lexA. Binds to the 16 bp palindromic sequence 5'-CTGTATATATATACAG-3'. In the presence of single-stranded DNA, RecA interacts with LexA causing an autocatalytic cleavage which disrupts the DNA-binding part of LexA, leading to derepression of the SOS regulon and eventually DNA repair. This is LexA repressor from Yersinia pseudotuberculosis serotype O:1b (strain IP 31758).